The sequence spans 472 residues: Serine/threonine-protein kinase ULK3 (472 aa).

A Protein kinase domain is found at 14 to 270 (FILTERLGSG…FQDFFAHPWV (257 aa)). ATP contacts are provided by residues 20–28 (LGSGTYATV) and Lys-44. The active-site Proton acceptor is Asp-137. Ser-176 carries the post-translational modification Phosphoserine. The 67-residue stretch at 281–347 (LAQATALVVE…VSRAEELKAI (67 aa)) folds into the MIT 1 domain. Phosphoserine; by autocatalysis occurs at positions 350 and 384. In terms of domain architecture, MIT 2 spans 376–444 (LLAALEVASA…ARAEYLKEQI (69 aa)). Ser-464 bears the Phosphoserine mark.

The protein belongs to the protein kinase superfamily. Ser/Thr protein kinase family. APG1/unc-51/ULK1 subfamily. Interacts (via protein kinase domain) with SUFU. Post-translationally, autophosphorylated. Autophosphorylation is blocked by interaction with SUFU.

The protein resides in the cytoplasm. It carries out the reaction L-seryl-[protein] + ATP = O-phospho-L-seryl-[protein] + ADP + H(+). The catalysed reaction is L-threonyl-[protein] + ATP = O-phospho-L-threonyl-[protein] + ADP + H(+). Functionally, serine/threonine protein kinase that acts as a regulator of Sonic hedgehog (SHH) signaling and autophagy. Acts as a negative regulator of SHH signaling in the absence of SHH ligand: interacts with SUFU, thereby inactivating the protein kinase activity and preventing phosphorylation of GLI proteins (GLI1, GLI2 and/or GLI3). Positively regulates SHH signaling in the presence of SHH: dissociates from SUFU, autophosphorylates and mediates phosphorylation of GLI2, activating it and promoting its nuclear translocation. Phosphorylates in vitro GLI2, as well as GLI1 and GLI3, although less efficiently. Also acts as a regulator of autophagy: following cellular senescence, able to induce autophagy. This chain is Serine/threonine-protein kinase ULK3 (Ulk3), found in Rattus norvegicus (Rat).